Here is a 391-residue protein sequence, read N- to C-terminus: tRNA-specific 2-thiouridylase MnmA (391 aa).

ATP-binding positions include 9–16 and Met35; that span reads GMSGGVDS. The segment at 95–97 is interaction with target base in tRNA; that stretch reads NPD. Cys100 functions as the Nucleophile in the catalytic mechanism. Cys100 and Cys196 form a disulfide bridge. Position 124 (Gly124) interacts with ATP. The interaction with tRNA stretch occupies residues 146–148; the sequence is KDQ. Cys196 (cysteine persulfide intermediate) is an active-site residue. The interval 308–309 is interaction with tRNA; sequence RY.

This sequence belongs to the MnmA/TRMU family.

It is found in the cytoplasm. It catalyses the reaction S-sulfanyl-L-cysteinyl-[protein] + uridine(34) in tRNA + AH2 + ATP = 2-thiouridine(34) in tRNA + L-cysteinyl-[protein] + A + AMP + diphosphate + H(+). In terms of biological role, catalyzes the 2-thiolation of uridine at the wobble position (U34) of tRNA, leading to the formation of s(2)U34. In Burkholderia orbicola (strain MC0-3), this protein is tRNA-specific 2-thiouridylase MnmA.